The following is a 445-amino-acid chain: Probable multidrug resistance protein YpnP (445 aa).

Transmembrane regions (helical) follow at residues 15-35, 49-69, 95-115, 136-156, 168-188, 194-214, 240-260, 277-297, 314-334, 355-375, 384-404, and 411-431; these read LVLF…FQFI, LGAA…ILGL, AFVV…FFLS, LQIQ…STVL, FIAF…SVFR, AAYS…FYVI, IPAG…MSVV, LDSI…SMAG, LGVI…WVFG, LKWI…NGIV, VLVL…ALFS, and GIGL…FLYY.

This sequence belongs to the multi antimicrobial extrusion (MATE) (TC 2.A.66.1) family.

It is found in the cell membrane. In Bacillus subtilis (strain 168), this protein is Probable multidrug resistance protein YpnP (ypnP).